Consider the following 54-residue polypeptide: Califin-C (54 aa).

Cysteine 25 and cysteine 53 form a disulfide bridge. At leucine 36 the chain carries Leucine amide.

Belongs to the molluscan ELH family. In terms of assembly, this protein consists of a large 36-residue subunit, bound by a single disulfide-bond to a small 18-residue subunit.

Its subcellular location is the secreted. Its function is as follows. Injected in sexually mature animals califin C excites LB and LC cells of the abdominal ganglion and cause egg-laying. The protein is Califin-C of Aplysia californica (California sea hare).